A 423-amino-acid chain; its full sequence is ATP-dependent RNA helicase RhlB (423 aa).

The short motif at 9–37 (LRFSDLPLHHQVLAALQEKGFDYCTPIQA) is the Q motif element. Positions 40 to 217 (LPMSLAGKDV…FEDMNDPEYV (178 aa)) constitute a Helicase ATP-binding domain. Residue 53–60 (AQTGTGKT) participates in ATP binding. The DEAD box signature appears at 163 to 166 (DEAD). Positions 241–388 (KMALLLTLLE…VSQYDVAALL (148 aa)) constitute a Helicase C-terminal domain. The tract at residues 397–423 (KRGNNNSKNSANSNRTFQKKRSLKRNF) is disordered. The span at 400–410 (NNNSKNSANSN) shows a compositional bias: low complexity. A compositionally biased stretch (basic residues) spans 413–423 (FQKKRSLKRNF).

This sequence belongs to the DEAD box helicase family. RhlB subfamily. Component of the RNA degradosome, which is a multiprotein complex involved in RNA processing and mRNA degradation.

The protein localises to the cytoplasm. It catalyses the reaction ATP + H2O = ADP + phosphate + H(+). DEAD-box RNA helicase involved in RNA degradation. Has RNA-dependent ATPase activity and unwinds double-stranded RNA. This chain is ATP-dependent RNA helicase RhlB, found in Pasteurella multocida (strain Pm70).